We begin with the raw amino-acid sequence, 275 residues long: Phage-like element PBSX protein XkdF (275 aa).

Positions 247–275 (KARGASKQTADDTGGNTEQVKKSIWSGLL) are disordered.

To B.subtilis YqbD.

This chain is Phage-like element PBSX protein XkdF (xkdF), found in Bacillus subtilis (strain 168).